A 354-amino-acid polypeptide reads, in one-letter code: MLKLFLSTPRTLPNSRFLLLRRLQPLGLRYRSDASSLHLFTPTWRDHATNTIIKFVPQQVAYVVERMGRFSRILTPGVAFLAPIIDKIAYIHSLKERALEIPTQSAITLDNVSLGLDGVLYIQVYDPYKASYGVEDADYAISQLAQTTMRSEIGRLTLDHVLRERQSLNIHITDAINKAAESWGIRCLRHEIRDIRPPESVVMAMHQQVSAERQKRAEILESEGKRQAAINVAEGDKQAEILDSEGQKIKTINSALAEAQAIREKASATASGIAVLADSIKKQEHGLEAVSLYIAQQYITNFGKLAKASNSMIVPASTSDVSGMVAQALSIFKQVSKTTAPDKSTPKELHTDEK.

The protein belongs to the band 7/mec-2 family.

The protein resides in the mitochondrion. This is an uncharacterized protein from Schizosaccharomyces pombe (strain 972 / ATCC 24843) (Fission yeast).